Consider the following 400-residue polypeptide: Glutamyl-tRNA reductase (400 aa).

Substrate is bound by residues Thr-45–Arg-48, Ser-103, Glu-108–Gln-110, and Gln-114. The active-site Nucleophile is Cys-46. Gly-179–Gly-184 is an NADP(+) binding site.

The protein belongs to the glutamyl-tRNA reductase family. As to quaternary structure, homodimer.

The catalysed reaction is (S)-4-amino-5-oxopentanoate + tRNA(Glu) + NADP(+) = L-glutamyl-tRNA(Glu) + NADPH + H(+). It functions in the pathway porphyrin-containing compound metabolism; protoporphyrin-IX biosynthesis; 5-aminolevulinate from L-glutamyl-tRNA(Glu): step 1/2. In terms of biological role, catalyzes the NADPH-dependent reduction of glutamyl-tRNA(Glu) to glutamate 1-semialdehyde (GSA). The chain is Glutamyl-tRNA reductase from Clostridium perfringens (strain ATCC 13124 / DSM 756 / JCM 1290 / NCIMB 6125 / NCTC 8237 / Type A).